We begin with the raw amino-acid sequence, 48 residues long: Large ribosomal subunit protein eL40 (48 aa).

This sequence belongs to the eukaryotic ribosomal protein eL40 family.

The protein is Large ribosomal subunit protein eL40 of Methanocella arvoryzae (strain DSM 22066 / NBRC 105507 / MRE50).